Consider the following 99-residue polypeptide: U1-theraphotoxin-Tal1a (99 aa).

Residues 1–22 (MNTIQVIIFAVVLVLTVTVGQA) form the signal peptide. Residues 23 to 57 (DEDSAETSLLRKLKEAEASLFGQHLEESQHSREKR) constitute a propeptide that is removed on maturation. 3 cysteine pairs are disulfide-bonded: cysteine 58–cysteine 73, cysteine 65–cysteine 78, and cysteine 72–cysteine 93. Serine 98 is subject to Serine amide.

Belongs to the neurotoxin 14 (magi-1) family. 08 (Ltx-4) subfamily. As to expression, expressed by the venom gland.

Its subcellular location is the secreted. In terms of biological role, insecticidal toxin that shows strong lethal effects on American cockroaches (P.americana) and common mealbeetle (T.molitor). Possibly acts by blocking ion channel currents. Also shows significant analgesic effects in mice models of pain including abdominal writhing induced by acetic acid and formalin-induced paw licking tests. In addition, exerts marked inhibition of proliferation of some human tumor cell lines including C8166, Molt-4, A-549, BIU-87, T24, and Calu-6. In Tliltocatl albopilosus (Curlyhair tarantula), this protein is U1-theraphotoxin-Tal1a.